Here is a 249-residue protein sequence, read N- to C-terminus: Probable transcriptional regulatory protein Strop_1792 (249 aa).

It belongs to the TACO1 family.

The protein resides in the cytoplasm. In Salinispora tropica (strain ATCC BAA-916 / DSM 44818 / JCM 13857 / NBRC 105044 / CNB-440), this protein is Probable transcriptional regulatory protein Strop_1792.